Consider the following 277-residue polypeptide: Leucine-rich repeat-containing protein 10 (277 aa).

LRR repeat units lie at residues 53 to 74 (ELVK…LGQL), 76 to 97 (NLQI…VCTL), 99 to 120 (QLCI…LSLL), 122 to 143 (NLRT…VCEL), 145 to 167 (LLKT…RRLQ), 168 to 189 (ELRT…LLHM), and 191 to 212 (FLEV…AHLS).

It is found in the nucleus. Its function is as follows. May play important roles in cardiac development and/or cardiac function. The sequence is that of Leucine-rich repeat-containing protein 10 (LRRC10) from Homo sapiens (Human).